A 467-amino-acid polypeptide reads, in one-letter code: Pup--protein ligase (467 aa).

Glu12 is a binding site for Mg(2+). Arg56 contacts ATP. Residue Tyr58 participates in Mg(2+) binding. The Proton acceptor role is filled by Asp60. Glu66 lines the Mg(2+) pocket. ATP-binding residues include Thr69 and Trp431.

This sequence belongs to the Pup ligase/Pup deamidase family. Pup-conjugating enzyme subfamily.

The enzyme catalyses ATP + [prokaryotic ubiquitin-like protein]-L-glutamate + [protein]-L-lysine = ADP + phosphate + N(6)-([prokaryotic ubiquitin-like protein]-gamma-L-glutamyl)-[protein]-L-lysine.. Its pathway is protein degradation; proteasomal Pup-dependent pathway. The protein operates within protein modification; protein pupylation. Its function is as follows. Catalyzes the covalent attachment of the prokaryotic ubiquitin-like protein modifier Pup to the proteasomal substrate proteins, thereby targeting them for proteasomal degradation. This tagging system is termed pupylation. The ligation reaction involves the side-chain carboxylate of the C-terminal glutamate of Pup and the side-chain amino group of a substrate lysine. This is Pup--protein ligase from Corynebacterium jeikeium (strain K411).